We begin with the raw amino-acid sequence, 68 residues long: MKFTATFLMMAIFVLMVEPGECGWGSFFKKAAHVGKHVGKAALTHYLGDKQELNKRAVDEDPNVIVFE.

An N-terminal signal peptide occupies residues methionine 1–cysteine 22. Residues glycine 48–glutamate 68 constitute a propeptide that is removed on maturation.

Belongs to the pleurocidin family. Goblet cells.

It localises to the secreted. The protein localises to the membrane. In terms of biological role, antimicrobial peptide with potent activity against Gram-positive and Gram-negative bacteria. Activity against E.coli and B.subtilis. Weaker activity against L.mucor, s.marcescens and P.aeruginosa. May play a role in innate host defense. In Pseudopleuronectes americanus (Winter flounder), this protein is Pleurocidin (ple1).